We begin with the raw amino-acid sequence, 423 residues long: Diaminobutyrate--2-oxoglutarate transaminase (423 aa).

The residue at position 271 (lysine 271) is an N6-(pyridoxal phosphate)lysine.

Belongs to the class-III pyridoxal-phosphate-dependent aminotransferase family. The cofactor is pyridoxal 5'-phosphate.

The catalysed reaction is L-2,4-diaminobutanoate + 2-oxoglutarate = L-aspartate 4-semialdehyde + L-glutamate. It functions in the pathway amine and polyamine biosynthesis; ectoine biosynthesis; L-ectoine from L-aspartate 4-semialdehyde: step 1/3. Functionally, catalyzes reversively the conversion of L-aspartate beta-semialdehyde (ASA) to L-2,4-diaminobutyrate (DABA) by transamination with L-glutamate. The sequence is that of Diaminobutyrate--2-oxoglutarate transaminase (ectB) from Streptomyces avermitilis (strain ATCC 31267 / DSM 46492 / JCM 5070 / NBRC 14893 / NCIMB 12804 / NRRL 8165 / MA-4680).